Consider the following 179-residue polypeptide: Large ribosomal subunit protein uL5 (179 aa).

Belongs to the universal ribosomal protein uL5 family. In terms of assembly, part of the 50S ribosomal subunit; part of the 5S rRNA/L5/L18/L25 subcomplex. Contacts the 5S rRNA and the P site tRNA. Forms a bridge to the 30S subunit in the 70S ribosome.

This is one of the proteins that bind and probably mediate the attachment of the 5S RNA into the large ribosomal subunit, where it forms part of the central protuberance. In the 70S ribosome it contacts protein S13 of the 30S subunit (bridge B1b), connecting the 2 subunits; this bridge is implicated in subunit movement. Contacts the P site tRNA; the 5S rRNA and some of its associated proteins might help stabilize positioning of ribosome-bound tRNAs. This is Large ribosomal subunit protein uL5 from Shewanella sp. (strain ANA-3).